A 108-amino-acid chain; its full sequence is Small ribosomal subunit protein uS17 (108 aa).

A disordered region spans residues 1 to 26; sequence MREKMAEATETQASETSTRGRPKTRV. Over residues 8–17 the composition is skewed to low complexity; it reads ATETQASETS.

Belongs to the universal ribosomal protein uS17 family. Part of the 30S ribosomal subunit.

Its function is as follows. One of the primary rRNA binding proteins, it binds specifically to the 5'-end of 16S ribosomal RNA. This Myxococcus xanthus (strain DK1622) protein is Small ribosomal subunit protein uS17.